Consider the following 399-residue polypeptide: Protein TWIN LOV 1 (399 aa).

In terms of domain architecture, PAS 1 spans 26-97; that stretch reads LWIKEALEEL…MEIREAIREE (72 aa). Residues 98 to 153 form the PAC 1 domain; the sequence is RSVQVSLLNYRKSGSPFWMLFHMCPVFGKDDGKVTNFVAVQVPISGREHHRKKLRN. Positions 249 to 320 constitute a PAS 2 domain; it reads SLVISLGRIK…EMKECILKGQ (72 aa). Cys296 carries the post-translational modification S-4a-FMN cysteine. Positions 320–376 constitute a PAC 2 domain; the sequence is QSCTVQILNYSNRKDKSSFWNLLHISPVRNASGKTAYFVGVQVEASCRNTEIKELRP.

Interacts with VTC2, VTC5 and BLH10. Post-translationally, FMN binds covalently to cysteine after exposure to blue light and is reversed in the dark.

This Arabidopsis thaliana (Mouse-ear cress) protein is Protein TWIN LOV 1 (TLP1).